A 61-amino-acid chain; its full sequence is MSLSKEQKDTLFSLIHEVMDKNSELEKVCNECGPFSANEYEELSKEFDNKEQELIDYINSL.

This is an uncharacterized protein from Escherichia coli (Bacteriophage T4).